The primary structure comprises 229 residues: NAD(P)H-hydrate epimerase (229 aa).

The 212-residue stretch at 11-222 (YAAADIRAAE…DVGLDLSGAT (212 aa)) folds into the YjeF N-terminal domain. Residue 59 to 63 (NNGGD) coordinates (6S)-NADPHX. 2 residues coordinate K(+): Asn60 and Asp124. (6S)-NADPHX is bound by residues 128–136 (GIGTTASPA) and Asp164. Ser167 provides a ligand contact to K(+).

The protein belongs to the NnrE/AIBP family. The cofactor is K(+).

It carries out the reaction (6R)-NADHX = (6S)-NADHX. It catalyses the reaction (6R)-NADPHX = (6S)-NADPHX. In terms of biological role, catalyzes the epimerization of the S- and R-forms of NAD(P)HX, a damaged form of NAD(P)H that is a result of enzymatic or heat-dependent hydration. This is a prerequisite for the S-specific NAD(P)H-hydrate dehydratase to allow the repair of both epimers of NAD(P)HX. This chain is NAD(P)H-hydrate epimerase, found in Clavibacter sepedonicus (Clavibacter michiganensis subsp. sepedonicus).